The chain runs to 151 residues: Transcription elongation factor GreA (151 aa).

Positions 41 to 62 (AEYHAAREKQSFIEGRIKELEA) form a coiled coil.

It belongs to the GreA/GreB family.

Necessary for efficient RNA polymerase transcription elongation past template-encoded arresting sites. The arresting sites in DNA have the property of trapping a certain fraction of elongating RNA polymerases that pass through, resulting in locked ternary complexes. Cleavage of the nascent transcript by cleavage factors such as GreA or GreB allows the resumption of elongation from the new 3'terminus. GreA releases sequences of 2 to 3 nucleotides. In Cereibacter sphaeroides (strain ATCC 17023 / DSM 158 / JCM 6121 / CCUG 31486 / LMG 2827 / NBRC 12203 / NCIMB 8253 / ATH 2.4.1.) (Rhodobacter sphaeroides), this protein is Transcription elongation factor GreA.